Consider the following 95-residue polypeptide: Small ribosomal subunit protein uS19 (95 aa).

The segment at 76 to 95 is disordered; the sequence is PTRRFGGHADKKAKKGELKK. Positions 82–95 are enriched in basic and acidic residues; that stretch reads GHADKKAKKGELKK.

The protein belongs to the universal ribosomal protein uS19 family.

Its function is as follows. Protein S19 forms a complex with S13 that binds strongly to the 16S ribosomal RNA. The protein is Small ribosomal subunit protein uS19 (rpsS) of Thermotoga maritima (strain ATCC 43589 / DSM 3109 / JCM 10099 / NBRC 100826 / MSB8).